We begin with the raw amino-acid sequence, 411 residues long: Arginine deiminase (411 aa).

C401 acts as the Amidino-cysteine intermediate in catalysis.

The protein belongs to the arginine deiminase family.

The protein localises to the cytoplasm. It carries out the reaction L-arginine + H2O = L-citrulline + NH4(+). The protein operates within amino-acid degradation; L-arginine degradation via ADI pathway; carbamoyl phosphate from L-arginine: step 1/2. This Streptococcus pyogenes serotype M2 (strain MGAS10270) protein is Arginine deiminase.